We begin with the raw amino-acid sequence, 109 residues long: UPF0102 protein Suden_1901 (109 aa).

Belongs to the UPF0102 family.

This is UPF0102 protein Suden_1901 from Sulfurimonas denitrificans (strain ATCC 33889 / DSM 1251) (Thiomicrospira denitrificans (strain ATCC 33889 / DSM 1251)).